Here is a 124-residue protein sequence, read N- to C-terminus: Putative RNA polymerase II transcriptional coactivator (124 aa).

The disordered stretch occupies residues 1–61 (MSSSSSSEDE…GRLKDSDGNE (61 aa)). Composition is skewed to basic and acidic residues over residues 11-21 (LEKKVTKEQKK) and 39-58 (QEVK…KDSD).

The protein belongs to the transcriptional coactivator PC4 family.

It localises to the nucleus. General coactivator that functions cooperatively with TAFs and mediates functional interactions between upstream activators and the general transcriptional machinery. Binds single-stranded DNA. This Caenorhabditis elegans protein is Putative RNA polymerase II transcriptional coactivator.